Here is a 388-residue protein sequence, read N- to C-terminus: (S)-8-oxocitronellyl enol synthase ISY1 (388 aa).

Residues 35–37 (TGI), 63–64 (RR), 81–82 (DV), 105–106 (TW), and Gln143 each bind NADP(+). Residues Lys147 and Tyr178 contribute to the active site. Residues Tyr178, Ile205, and 212–214 (SMM) each bind NADP(+).

It belongs to the short-chain dehydrogenases/reductases (SDR) family.

The catalysed reaction is (S)-8-oxocitronellyl enol + NADP(+) = (6E)-8-oxogeranial + NADPH + H(+). It catalyses the reaction (S)-8-oxocitronellyl enol + NAD(+) = (6E)-8-oxogeranial + NADH + H(+). Iridoid synthase that catalyzes the first step in generation of the iridoid ring scaffold using the linear monoterpene (6E)-8-oxogeranial as substrate. Iridoids comprise a large family of distinctive bicyclic monoterpenes that possess a wide range of pharmacological activities, including anticancer, anti-inflammatory, antifungal and antibacterial activities. Catalyzes the conversion of the linear monoterpene (6E)-8-oxogeranial to (S)-8-oxocitronellyl enol, a precursor of nepetalactones, which are metabolites that are both insect-repellent and have euphoric effect in cats. This Nepeta cataria (Catnip) protein is (S)-8-oxocitronellyl enol synthase ISY1.